Reading from the N-terminus, the 309-residue chain is Metal ABC transporter substrate-binding lipoprotein FimA (309 aa).

Positions 1–20 (MKKIASVLALFVALLFGLLA) are cleaved as a signal peptide. Cysteine 21 carries the N-palmitoyl cysteine lipid modification. Cysteine 21 carries S-diacylglycerol cysteine lipidation. A divalent metal cation-binding residues include histidine 67, histidine 139, glutamate 205, and aspartate 280.

This sequence belongs to the bacterial solute-binding protein 9 family. Lipoprotein receptor antigen (Lrai) subfamily.

The protein resides in the cell membrane. Its function is as follows. Part of an ATP-binding cassette (ABC) transport system involved in metal import. Binds a metal with high affinity and specificity and delivers it to the membrane permease for translocation into the cytoplasm. Also acts as an adhesin which is involved on adherence to extracellular matrix. It is an important factor in pathogenesis and infection. May contribute to the formation and accumulation of dental plaque. The chain is Metal ABC transporter substrate-binding lipoprotein FimA (fimA) from Streptococcus parasanguinis.